We begin with the raw amino-acid sequence, 330 residues long: tRNA U34 carboxymethyltransferase (330 aa).

Carboxy-S-adenosyl-L-methionine-binding positions include lysine 91, tryptophan 105, lysine 110, glycine 130, 152–154, 181–182, methionine 196, tyrosine 200, and arginine 315; these read DPS and IE.

Belongs to the class I-like SAM-binding methyltransferase superfamily. CmoB family. In terms of assembly, homotetramer.

The catalysed reaction is carboxy-S-adenosyl-L-methionine + 5-hydroxyuridine(34) in tRNA = 5-carboxymethoxyuridine(34) in tRNA + S-adenosyl-L-homocysteine + H(+). Functionally, catalyzes carboxymethyl transfer from carboxy-S-adenosyl-L-methionine (Cx-SAM) to 5-hydroxyuridine (ho5U) to form 5-carboxymethoxyuridine (cmo5U) at position 34 in tRNAs. In Shewanella halifaxensis (strain HAW-EB4), this protein is tRNA U34 carboxymethyltransferase.